We begin with the raw amino-acid sequence, 218 residues long: Ribulose-phosphate 3-epimerase (218 aa).

Position 10 (serine 10) interacts with substrate. 3 residues coordinate a divalent metal cation: histidine 35, aspartate 37, and histidine 68. Aspartate 37 functions as the Proton acceptor in the catalytic mechanism. Residues histidine 68, 144-147, 177-179, and 199-200 each bind substrate; these read GFSG, DGG, and GS. Aspartate 177 is an a divalent metal cation binding site. The Proton donor role is filled by aspartate 177.

This sequence belongs to the ribulose-phosphate 3-epimerase family. It depends on a divalent metal cation as a cofactor.

It carries out the reaction D-ribulose 5-phosphate = D-xylulose 5-phosphate. Its pathway is carbohydrate degradation. Catalyzes the reversible epimerization of D-ribulose 5-phosphate to D-xylulose 5-phosphate. In Treponema pallidum (strain Nichols), this protein is Ribulose-phosphate 3-epimerase.